The following is a 740-amino-acid chain: Ion-translocating oxidoreductase complex subunit C (740 aa).

4Fe-4S ferredoxin-type domains follow at residues 369-397 (GEPQEEQSCIRCSACADACPADLLPQQLY) and 407-436 (KATTHNIADCIECGACAWVCPSNIPLVQYF). 8 residues coordinate [4Fe-4S] cluster: Cys377, Cys380, Cys383, Cys387, Cys416, Cys419, Cys422, and Cys426. Positions 602 to 717 (KLEQQQANAE…PEEQVDPRKA (116 aa)) are disordered. 2 stretches are compositionally biased toward low complexity: residues 605–615 (QQQANAEPEQQ) and 637–647 (QQQANAEPEQQ).

Belongs to the 4Fe4S bacterial-type ferredoxin family. RnfC subfamily. The complex is composed of six subunits: RsxA, RsxB, RsxC, RsxD, RsxE and RsxG. Requires [4Fe-4S] cluster as cofactor.

It is found in the cell inner membrane. Part of a membrane-bound complex that couples electron transfer with translocation of ions across the membrane. Required to maintain the reduced state of SoxR. This chain is Ion-translocating oxidoreductase complex subunit C, found in Escherichia coli (strain ATCC 8739 / DSM 1576 / NBRC 3972 / NCIMB 8545 / WDCM 00012 / Crooks).